Consider the following 651-residue polypeptide: Maternal embryonic leucine zipper kinase (651 aa).

The 253-residue stretch at Tyr11–Ile263 folds into the Protein kinase domain. ATP contacts are provided by residues Ile17–Val25 and Lys40. Thr56 carries the post-translational modification Phosphothreonine; by autocatalysis. Asp132 serves as the catalytic Proton acceptor. Tyr163 carries the phosphotyrosine; by autocatalysis modification. Position 167 is a phosphothreonine; by autocatalysis (Thr167). 2 positions are modified to phosphoserine; by autocatalysis: Ser171 and Ser253. Positions Leu282–Leu321 are UBA-like. Residues Arg326–Val651 are autoinhibitory region. Residues Ser336, Ser343, and Ser356 each carry the phosphoserine; by autocatalysis modification. A Phosphotyrosine modification is found at Tyr367. Ser391 bears the Phosphoserine; by autocatalysis mark. Thr398 carries the phosphothreonine; by autocatalysis modification. Phosphoserine; by autocatalysis is present on Ser407. Thr409 carries the phosphothreonine modification. The residue at position 431 (Ser431) is a Phosphoserine; by autocatalysis. A Phosphothreonine modification is found at Thr478. Thr494 carries the post-translational modification Phosphothreonine; by autocatalysis. The residue at position 498 (Ser498) is a Phosphoserine. Residue Ser505 is modified to Phosphoserine; by autocatalysis. At Thr518 the chain carries Phosphothreonine. Ser529 is subject to Phosphoserine; by autocatalysis. Ser529 is subject to Phosphoserine. Residue Thr539 is modified to Phosphothreonine; by autocatalysis. In terms of domain architecture, KA1 spans Ser602–Val651.

Belongs to the protein kinase superfamily. CAMK Ser/Thr protein kinase family. SNF1 subfamily. As to quaternary structure, monomer. Interacts with ZNF622 and PPP1R8. Autophosphorylated: autophosphorylation of the T-loop at Thr-167 and Ser-171 is required for activation. Thr-478 phosphorylation during mitosis promotes interaction with PPP1R8. Expressed in placenta, kidney, thymus, testis, ovary and intestine.

The protein resides in the cell membrane. It carries out the reaction L-tyrosyl-[protein] + ATP = O-phospho-L-tyrosyl-[protein] + ADP + H(+). The catalysed reaction is L-seryl-[protein] + ATP = O-phospho-L-seryl-[protein] + ADP + H(+). It catalyses the reaction L-threonyl-[protein] + ATP = O-phospho-L-threonyl-[protein] + ADP + H(+). Activated by autophosphorylation of the T-loop at Thr-167 and Ser-171: in contrast to other members of the SNF1 subfamily, phosphorylation at Thr-167 is not mediated by STK11/LKB1 but via autophosphorylation instead. Inhibited by calcium-binding. Kinase activity is also regulated by reducing agents: dithiothreitol (DTT) or reduced glutathione are required for kinase activity in vitro; such dependence is however not due to the presence of disulfide bonds. Its function is as follows. Serine/threonine-protein kinase involved in various processes such as cell cycle regulation, self-renewal of stem cells, apoptosis and splicing regulation. Has a broad substrate specificity; phosphorylates BCL2L14, CDC25B, MAP3K5/ASK1 and ZNF622. Acts as an activator of apoptosis by phosphorylating and activating MAP3K5/ASK1. Acts as a regulator of cell cycle, notably by mediating phosphorylation of CDC25B, promoting localization of CDC25B to the centrosome and the spindle poles during mitosis. Plays a key role in cell proliferation and carcinogenesis. Required for proliferation of embryonic and postnatal multipotent neural progenitors. Phosphorylates and inhibits BCL2L14, possibly leading to affect mammary carcinogenesis by mediating inhibition of the pro-apoptotic function of BCL2L14. Also involved in the inhibition of spliceosome assembly during mitosis by phosphorylating ZNF622, thereby contributing to its redirection to the nucleus. May also play a role in primitive hematopoiesis. The polypeptide is Maternal embryonic leucine zipper kinase (MELK) (Homo sapiens (Human)).